The sequence spans 321 residues: Lipoyl synthase (321 aa).

[4Fe-4S] cluster is bound by residues C68, C73, C79, C94, C98, C101, and S308. Positions 80–297 (FNHGTATFMI…KEIALELGFT (218 aa)) constitute a Radical SAM core domain.

The protein belongs to the radical SAM superfamily. Lipoyl synthase family. It depends on [4Fe-4S] cluster as a cofactor.

It localises to the cytoplasm. It carries out the reaction [[Fe-S] cluster scaffold protein carrying a second [4Fe-4S](2+) cluster] + N(6)-octanoyl-L-lysyl-[protein] + 2 oxidized [2Fe-2S]-[ferredoxin] + 2 S-adenosyl-L-methionine + 4 H(+) = [[Fe-S] cluster scaffold protein] + N(6)-[(R)-dihydrolipoyl]-L-lysyl-[protein] + 4 Fe(3+) + 2 hydrogen sulfide + 2 5'-deoxyadenosine + 2 L-methionine + 2 reduced [2Fe-2S]-[ferredoxin]. It functions in the pathway protein modification; protein lipoylation via endogenous pathway; protein N(6)-(lipoyl)lysine from octanoyl-[acyl-carrier-protein]: step 2/2. Functionally, catalyzes the radical-mediated insertion of two sulfur atoms into the C-6 and C-8 positions of the octanoyl moiety bound to the lipoyl domains of lipoate-dependent enzymes, thereby converting the octanoylated domains into lipoylated derivatives. In Aliivibrio fischeri (strain ATCC 700601 / ES114) (Vibrio fischeri), this protein is Lipoyl synthase.